The chain runs to 207 residues: MPKVQVVNMQGSPVGELELDEYVFGIEPNTHVMHQAVVGQLASQRRGTHSTLLRGEVRGGGRKPWRQKGTGRARAGSIRSPLWRGGAVLFGPKPRKYGFSLPKKVRRLALRSALSSKVNEQKLIVLEDLSLNEAKTREMVKVLQALNVSKKALIVTDEFMETIERSARNIAGIKTTAVEGMNIYDLLNSDVIVMTKAAVTKTEEVLA.

The tract at residues 56–76 (EVRGGGRKPWRQKGTGRARAG) is disordered. The span at 60–71 (GGRKPWRQKGTG) shows a compositional bias: basic residues.

This sequence belongs to the universal ribosomal protein uL4 family. In terms of assembly, part of the 50S ribosomal subunit.

Functionally, one of the primary rRNA binding proteins, this protein initially binds near the 5'-end of the 23S rRNA. It is important during the early stages of 50S assembly. It makes multiple contacts with different domains of the 23S rRNA in the assembled 50S subunit and ribosome. Forms part of the polypeptide exit tunnel. The sequence is that of Large ribosomal subunit protein uL4 from Desulfitobacterium hafniense (strain Y51).